Reading from the N-terminus, the 851-residue chain is DEAD-box ATP-dependent RNA helicase 29 (851 aa).

The tract at residues 1 to 49 (MARLNPSKPSSRGGKPRSSSADAMAEHKPPPGRPKREGEGASKKKAKSG) is disordered. The segment covering 7–20 (SKPSSRGGKPRSSS) has biased composition (low complexity). Over residues 24–42 (MAEHKPPPGRPKREGEGAS) the composition is skewed to basic and acidic residues. Positions 49 to 77 (GGFESMGLCEEVYRGVRHKGYRVPTPIQR) match the Q motif motif. Residues 80–253 (MPLILAGHDI…KAGLRDPQIV (174 aa)) form the Helicase ATP-binding domain. Position 93–100 (93–100 (ARTGSGKT)) interacts with ATP. The DEAD box signature appears at 201–204 (DEAD). The Helicase C-terminal domain maps to 277 to 426 (KLAALLYLVR…PAPTEEELLK (150 aa)). The interval 702-851 (KWQQKTHRSI…KGKMKGKGTR (150 aa)) is disordered. The span at 733 to 746 (RGNRKHTAAGRGRR) shows a compositional bias: basic residues. 2 stretches are compositionally biased toward basic and acidic residues: residues 773 to 787 (DIARMKNRSTKESKF) and 796 to 825 (RHDGPSKDGKFQKNRRPDGNGKNRRPDGNG). The span at 841–851 (GKGKMKGKGTR) shows a compositional bias: basic residues.

It belongs to the DEAD box helicase family. DDX54/DBP10 subfamily.

It catalyses the reaction ATP + H2O = ADP + phosphate + H(+). In Oryza sativa subsp. indica (Rice), this protein is DEAD-box ATP-dependent RNA helicase 29.